Here is a 59-residue protein sequence, read N- to C-terminus: UPF0434 protein HEAR2489 (59 aa).

The protein belongs to the UPF0434 family.

The chain is UPF0434 protein HEAR2489 from Herminiimonas arsenicoxydans.